The primary structure comprises 381 residues: Chaperone protein DnaJ (381 aa).

Residues 4-69 (DYYEILGVAR…EKRARYDQFG (66 aa)) form the J domain. Residues 139–221 (GGEKELRVTR…CGGSGLVRKT (83 aa)) form a CR-type zinc finger. Zn(2+) is bound by residues cysteine 152, cysteine 155, cysteine 169, cysteine 172, cysteine 195, cysteine 198, cysteine 209, and cysteine 212. CXXCXGXG motif repeat units follow at residues 152-159 (CGHCHGNG), 169-176 (CPTCQGRG), 195-202 (CSTCRGEG), and 209-216 (CRECGGSG).

Belongs to the DnaJ family. Homodimer. It depends on Zn(2+) as a cofactor.

It localises to the cytoplasm. Participates actively in the response to hyperosmotic and heat shock by preventing the aggregation of stress-denatured proteins and by disaggregating proteins, also in an autonomous, DnaK-independent fashion. Unfolded proteins bind initially to DnaJ; upon interaction with the DnaJ-bound protein, DnaK hydrolyzes its bound ATP, resulting in the formation of a stable complex. GrpE releases ADP from DnaK; ATP binding to DnaK triggers the release of the substrate protein, thus completing the reaction cycle. Several rounds of ATP-dependent interactions between DnaJ, DnaK and GrpE are required for fully efficient folding. Also involved, together with DnaK and GrpE, in the DNA replication of plasmids through activation of initiation proteins. This Carboxydothermus hydrogenoformans (strain ATCC BAA-161 / DSM 6008 / Z-2901) protein is Chaperone protein DnaJ.